The sequence spans 489 residues: E3 ubiquitin-protein ligase RGLG1 (489 aa).

The segment covering Met-1–Ser-10 has biased composition (basic and acidic residues). The tract at residues Met-1 to Lys-125 is disordered. A lipid anchor (N-myristoyl glycine) is attached at Gly-2. Over residues Ser-11–Ser-23 the composition is skewed to low complexity. Positions Tyr-34–Ser-57 are enriched in pro residues. The segment covering Pro-58–Pro-75 has biased composition (low complexity). Pro residues predominate over residues Asn-76–Ser-88. Residues Asn-156–Leu-376 form the VWFA domain. The RING-type zinc-finger motif lies at Cys-446–Arg-479.

In terms of assembly, interacts with the heterodimer UBC35/UEV1B. Interacts with ERF053. Interacts with PP2CA. Post-translationally, N-myristoylated. Ubiquitously expressed.

Its subcellular location is the cell membrane. The protein localises to the nucleus. The catalysed reaction is S-ubiquitinyl-[E2 ubiquitin-conjugating enzyme]-L-cysteine + [acceptor protein]-L-lysine = [E2 ubiquitin-conjugating enzyme]-L-cysteine + N(6)-ubiquitinyl-[acceptor protein]-L-lysine.. E3 ubiquitin-protein ligase that mediates the formation of 'Lys-63'-linked ubiquitin chains. Regulates apical dominance by acting on the auxin transport proteins abundance. Together with RGLG5, mediates the ubiquitination and subsequent proteasomal degradation of the target protein PP2CA. Functions as a positive regulator of abscisic acid (ABA) signaling through ABA-dependent degradation of PP2CA, a major inhibitor of ABA signaling. Acts as a negative regulator of drought stress response. The sequence is that of E3 ubiquitin-protein ligase RGLG1 from Arabidopsis thaliana (Mouse-ear cress).